We begin with the raw amino-acid sequence, 133 residues long: Small ribosomal subunit protein uS15 (133 aa).

It belongs to the universal ribosomal protein uS15 family. As to quaternary structure, part of the 30S ribosomal subunit.

In Methanosphaera stadtmanae (strain ATCC 43021 / DSM 3091 / JCM 11832 / MCB-3), this protein is Small ribosomal subunit protein uS15.